We begin with the raw amino-acid sequence, 459 residues long: MFRTTKSRVVEKNQNFSSASFESLSYPTRLNFYKKPPVSEISIEEFETWAIDRLVVLGEIESAMLRNKTKNELNGIIKKILDKRLPMSSNMARTVKGNSLDEERRKDHYSHFILRLAFSRSDELRIRFLRAESTLFRFRFVNEETRERQAFIDSLDFQWESVSQEEKDVFYEKLQASSQRNIENESFFKVPFFKVPDLVERRAVFVHKGYAYVPFSEQVSLVVEEFEENLKKALESTAKSLPRLDEDDRLLPILNHLSKGFVAPESSIVAPKSGAITAGQVDSFVSHFPLCAKHLHEVLKRDKHLRHFGRLQYGLFLKDIGLSVDEALVFWRKSFTNVTEDKFNKEYRYNIRHTYGLEGNRKNYKGYNCQQILTGPQLGPGDAHGCPYRTYSVNNLVSALASMGIAPDSAGCREVVEAVKARHYHIACTRVFELTHPNVGSLEESIHHPLQYFQLSLES.

[4Fe-4S] cluster contacts are provided by C291, C369, C386, and C428.

It belongs to the eukaryotic-type primase large subunit family. Heterodimer of a catalytic subunit spp1/pri1 and a regulatory subunit spp2/pri2, also known as the DNA primase complex. Component of the alpha DNA polymerase complex (also known as the alpha DNA polymerase-primase complex) consisting of four subunits: the catalytic subunit pol1, the accessory subunit spb70/pol12, and the primase complex subunits spp1/pri1 and spp2/pri2 respectively. Interacts with orc2; preferentially associates with the unphosphorylated orc2 in G1 pre-Start prior to orc2 being phosphorylated by cdc2, the interaction is mediated by spb70 and might enable the association of the whole alpha DNA polymerase complex to orc2/spb70 complex on chromatin. [4Fe-4S] cluster serves as cofactor.

Its subcellular location is the nucleus. It localises to the chromosome. Regulatory subunit of the DNA primase complex and component of the DNA polymerase alpha complex (also known as the alpha DNA polymerase-primase complex - primosome/replisome) which play an essential role in the initiation of DNA synthesis. During the S phase of the cell cycle, the DNA polymerase alpha complex (composed of a catalytic subunit pol1, an accessory subunit spb70/pol12 and two primase subunits, the catalytic subunit spp1/pri1 and the regulatory subunit spp2/pri2) is recruited to DNA at the replicative forks. The primase subunit of the polymerase alpha complex initiates DNA synthesis by oligomerising short RNA primers on both leading and lagging strands. The protein is DNA primase large subunit of Schizosaccharomyces pombe (strain 972 / ATCC 24843) (Fission yeast).